The primary structure comprises 275 residues: Putative phosphoenolpyruvate synthase regulatory protein (275 aa).

ADP is bound at residue 157 to 164 (GVSRCGKT).

It belongs to the pyruvate, phosphate/water dikinase regulatory protein family. PSRP subfamily.

It carries out the reaction [pyruvate, water dikinase] + ADP = [pyruvate, water dikinase]-phosphate + AMP + H(+). It catalyses the reaction [pyruvate, water dikinase]-phosphate + phosphate + H(+) = [pyruvate, water dikinase] + diphosphate. Functionally, bifunctional serine/threonine kinase and phosphorylase involved in the regulation of the phosphoenolpyruvate synthase (PEPS) by catalyzing its phosphorylation/dephosphorylation. In Bordetella pertussis (strain Tohama I / ATCC BAA-589 / NCTC 13251), this protein is Putative phosphoenolpyruvate synthase regulatory protein.